The sequence spans 296 residues: MPPGPRGVASGKPVISGQDQKYTLADSSKDLEGIAHMAIVDSLSPLHISLSSLESAWNNLLNIASQEDYSIPELSIPKIDVKSILSCKPKYSPKYPVVLQYISDHYVQVQDHIANAKELTEGLKFVSQLIMYKKIDHDTLASVSKMLSNYLTDYASTISSLKSVVCQDQTAPSHPMDESYMDTPLSMILKGTMPTGAGVDKGFALGGGGVGKGFNLNGGGVGKGFDLNGGGVGKGFDLNGGGVGKGFDLNGGGVGKGFDLNGGGVGKGFALGGGGVGKGFSLTGGGVGREVEIKDW.

Propeptides lie at residues 1-134 (MPPG…MYKK), 146-190 (MLSN…MILK), and 290-296 (EVEIKDW).

In terms of biological role, causes stimulation of sperm respiration and motility through intracellular alkalinization, transient elevations of cAMP, cGMP and calcium levels in sperm cells, and transient activation and subsequent inactivation of the membrane form of guanylate cyclase. The sequence is that of Sperm-activating peptides from Strongylocentrotus purpuratus (Purple sea urchin).